The following is a 391-amino-acid chain: MAIINMSDLDLQGKRVLIREDLNVPVSNGVVTSDARLRASLPTIELALANGAAVMVMSHLGRPTEGEYNPEYSMQPVVDYLAKALSCPVRLATDYLDGVDVVVGEVVVFENVRFNVGEGKNNEALSKKMAALCDVYVMDAFGTAHRAQASTHGVGMFAPIACAGPLLAQELDALGKALDNPARPMVAIVGGSKVSTKLTVLESLSGIVDQLVVGGGIANTFIAAAGYNVGKSLYEADLIDEAKRLVANAKSRGADIPVPTDVVVAGEFSPIAAATLKSVSEVADGEMIFDIGPDSAEALAKIIASAGTIVWNGPVGVFEFDQFGEGTKRIAQAIADSKAFSIAGGGDTLAAVDKYGIADKVSYISTGGGAFLEFLEGKELPAVAMLEKRGV.

Substrate contacts are provided by residues 21-23 (DLN), arginine 36, 59-62 (HLGR), arginine 113, and arginine 146. ATP is bound by residues lysine 197, glutamate 319, and 345–348 (GGDT).

This sequence belongs to the phosphoglycerate kinase family. Monomer.

The protein resides in the cytoplasm. The catalysed reaction is (2R)-3-phosphoglycerate + ATP = (2R)-3-phospho-glyceroyl phosphate + ADP. It participates in carbohydrate degradation; glycolysis; pyruvate from D-glyceraldehyde 3-phosphate: step 2/5. This is Phosphoglycerate kinase from Shewanella baltica (strain OS155 / ATCC BAA-1091).